Here is a 358-residue protein sequence, read N- to C-terminus: DnaJ homolog subfamily C member 18 (358 aa).

In terms of domain architecture, J spans N82–G146. The chain crosses the membrane as a helical span at residues A228 to L248.

It is found in the endoplasmic reticulum membrane. The sequence is that of DnaJ homolog subfamily C member 18 (DNAJC18) from Macaca fascicularis (Crab-eating macaque).